Here is a 246-residue protein sequence, read N- to C-terminus: Pyridoxine 5'-phosphate synthase (246 aa).

Asn-10 contacts 3-amino-2-oxopropyl phosphate. A 1-deoxy-D-xylulose 5-phosphate-binding site is contributed by Asp-12–His-13. Position 21 (Arg-21) interacts with 3-amino-2-oxopropyl phosphate. His-46 serves as the catalytic Proton acceptor. Arg-48 and His-53 together coordinate 1-deoxy-D-xylulose 5-phosphate. The active-site Proton acceptor is the Glu-73. Thr-103 is a 1-deoxy-D-xylulose 5-phosphate binding site. His-193 (proton donor) is an active-site residue. 3-amino-2-oxopropyl phosphate contacts are provided by residues Gly-194 and Gly-215 to His-216.

The protein belongs to the PNP synthase family. Homooctamer; tetramer of dimers.

The protein resides in the cytoplasm. It catalyses the reaction 3-amino-2-oxopropyl phosphate + 1-deoxy-D-xylulose 5-phosphate = pyridoxine 5'-phosphate + phosphate + 2 H2O + H(+). Its pathway is cofactor biosynthesis; pyridoxine 5'-phosphate biosynthesis; pyridoxine 5'-phosphate from D-erythrose 4-phosphate: step 5/5. Functionally, catalyzes the complicated ring closure reaction between the two acyclic compounds 1-deoxy-D-xylulose-5-phosphate (DXP) and 3-amino-2-oxopropyl phosphate (1-amino-acetone-3-phosphate or AAP) to form pyridoxine 5'-phosphate (PNP) and inorganic phosphate. The protein is Pyridoxine 5'-phosphate synthase of Rhodopirellula baltica (strain DSM 10527 / NCIMB 13988 / SH1).